Consider the following 60-residue polypeptide: Large ribosomal subunit protein bL33 (60 aa).

The protein belongs to the bacterial ribosomal protein bL33 family.

This Chlorobium chlorochromatii (strain CaD3) protein is Large ribosomal subunit protein bL33.